The sequence spans 42 residues: Proline-rich antimicrobial peptide 2 (42 aa).

As to expression, hemolymph.

The protein resides in the secreted. In terms of biological role, antimicrobial protein. Has antibacterial activity against the Gram-positive bacterium M.luteus (MIC=8.6 uM). Lacks antibacterial activity against the Gram-positive bacteria B.circulans, L.monocytogenes, S.aureus, and S.lutea, and the Gram-negative bacteria E.coli D31, E.coli ATCC 25922, and S.typhimurium. Lacks antifungal activity against S.cerevisiae, P.pastoris, Z.marxianus, C.albicans, C.fructus, C.wickerhamii, A.niger, F.oxysporum, and T.harizianum. This Galleria mellonella (Greater wax moth) protein is Proline-rich antimicrobial peptide 2.